Consider the following 291-residue polypeptide: ATP synthase gamma chain (291 aa).

It belongs to the ATPase gamma chain family. As to quaternary structure, F-type ATPases have 2 components, CF(1) - the catalytic core - and CF(0) - the membrane proton channel. CF(1) has five subunits: alpha(3), beta(3), gamma(1), delta(1), epsilon(1). CF(0) has three main subunits: a, b and c.

It localises to the cell inner membrane. Its function is as follows. Produces ATP from ADP in the presence of a proton gradient across the membrane. The gamma chain is believed to be important in regulating ATPase activity and the flow of protons through the CF(0) complex. The chain is ATP synthase gamma chain from Sphingopyxis alaskensis (strain DSM 13593 / LMG 18877 / RB2256) (Sphingomonas alaskensis).